Reading from the N-terminus, the 235-residue chain is 5'-methylthioadenosine/S-adenosylhomocysteine nucleosidase (235 aa).

The active-site Proton acceptor is the Glu-12. Substrate contacts are provided by residues Gly-78, Met-153, and 174-175 (ME). Asp-198 serves as the catalytic Proton donor.

Belongs to the PNP/UDP phosphorylase family. MtnN subfamily.

The catalysed reaction is S-adenosyl-L-homocysteine + H2O = S-(5-deoxy-D-ribos-5-yl)-L-homocysteine + adenine. The enzyme catalyses S-methyl-5'-thioadenosine + H2O = 5-(methylsulfanyl)-D-ribose + adenine. It catalyses the reaction 5'-deoxyadenosine + H2O = 5-deoxy-D-ribose + adenine. It functions in the pathway amino-acid biosynthesis; L-methionine biosynthesis via salvage pathway; S-methyl-5-thio-alpha-D-ribose 1-phosphate from S-methyl-5'-thioadenosine (hydrolase route): step 1/2. Functionally, catalyzes the irreversible cleavage of the glycosidic bond in both 5'-methylthioadenosine (MTA) and S-adenosylhomocysteine (SAH/AdoHcy) to adenine and the corresponding thioribose, 5'-methylthioribose and S-ribosylhomocysteine, respectively. Also cleaves 5'-deoxyadenosine, a toxic by-product of radical S-adenosylmethionine (SAM) enzymes, into 5-deoxyribose and adenine. The sequence is that of 5'-methylthioadenosine/S-adenosylhomocysteine nucleosidase from Pseudoalteromonas translucida (strain TAC 125).